The following is a 263-amino-acid chain: S-methyl-5'-thioadenosine phosphorylase (263 aa).

Residues Thr13, 55-56 (RH), and 88-89 (SA) each bind phosphate. Residue Met186 coordinates substrate. Thr187 is a binding site for phosphate. A substrate-binding site is contributed by 210 to 212 (DYD).

It belongs to the PNP/MTAP phosphorylase family. MTAP subfamily. In terms of assembly, homohexamer. Dimer of a homotrimer.

It catalyses the reaction S-methyl-5'-thioadenosine + phosphate = 5-(methylsulfanyl)-alpha-D-ribose 1-phosphate + adenine. Its pathway is amino-acid biosynthesis; L-methionine biosynthesis via salvage pathway; S-methyl-5-thio-alpha-D-ribose 1-phosphate from S-methyl-5'-thioadenosine (phosphorylase route): step 1/1. Its function is as follows. Catalyzes the reversible phosphorylation of S-methyl-5'-thioadenosine (MTA) to adenine and 5-methylthioribose-1-phosphate. Involved in the breakdown of MTA, a major by-product of polyamine biosynthesis. Responsible for the first step in the methionine salvage pathway after MTA has been generated from S-adenosylmethionine. Has broad substrate specificity with 6-aminopurine nucleosides as preferred substrates. The sequence is that of S-methyl-5'-thioadenosine phosphorylase from Nitrosopumilus maritimus (strain SCM1).